The primary structure comprises 322 residues: Undecaprenyl-phosphate 4-deoxy-4-formamido-L-arabinose transferase (322 aa).

The Cytoplasmic portion of the chain corresponds to 1–235 (MFEIHPVKKV…TCLTTTPLRM (235 aa)). Residues 236–256 (LSLLGSIIAIGGFSIAVLLVI) form a helical membrane-spanning segment. Residues 257–269 (LRLTFGPQWAAEG) lie on the Periplasmic side of the membrane. A helical membrane pass occupies residues 270–290 (VFMLFAVLFTFIGAQFIGMGL). At 291–322 (LGEYIGRIYTDVRARPRYFVQQVIRPSSKENE) the chain is on the cytoplasmic side.

This sequence belongs to the glycosyltransferase 2 family.

Its subcellular location is the cell inner membrane. It carries out the reaction UDP-4-deoxy-4-formamido-beta-L-arabinose + di-trans,octa-cis-undecaprenyl phosphate = 4-deoxy-4-formamido-alpha-L-arabinopyranosyl di-trans,octa-cis-undecaprenyl phosphate + UDP. The protein operates within glycolipid biosynthesis; 4-amino-4-deoxy-alpha-L-arabinose undecaprenyl phosphate biosynthesis; 4-amino-4-deoxy-alpha-L-arabinose undecaprenyl phosphate from UDP-4-deoxy-4-formamido-beta-L-arabinose and undecaprenyl phosphate: step 1/2. It functions in the pathway bacterial outer membrane biogenesis; lipopolysaccharide biosynthesis. Catalyzes the transfer of 4-deoxy-4-formamido-L-arabinose from UDP to undecaprenyl phosphate. The modified arabinose is attached to lipid A and is required for resistance to polymyxin and cationic antimicrobial peptides. This chain is Undecaprenyl-phosphate 4-deoxy-4-formamido-L-arabinose transferase, found in Escherichia coli O139:H28 (strain E24377A / ETEC).